We begin with the raw amino-acid sequence, 558 residues long: MAKFVFVTGGVVSSIGKGIVAASLGRLLKSRGYSVSILKLDPYLNVDPGTMSPFQHGEVFVTEDGAETDLDLGHYERFTDTAMSRLNSVTTGSIYQAVINKERRGDYNGGTVQVIPHITGEIRERIHRVAANSGADVVITEIGGTVGDIESLPFLEAIREFRGDVGRNDLAYIHVTLLPFIGTSGELKTKPTQHSVKELRAIGIQPDVLVCRSDRPINEDLKSKIGGFCGVPNRAVITALDADSIYAVPISLEEEGLCLEMLDVLNLTDHDSDMKSWVELVHKLRNPGPAVKVALVGKYVQLNDAYLSVVEALRHACLTQDASLELSWVCAEQIETHGPENLLKGMDAVVVPGGFGNRGVDGKVAAIRWAREQRVPFLGLCLGMQCAVIEWARNQAGLTGASSSELEPDTNHPVIHLLPEQQDVVDLGGTMRLGVYPCRIAPDTLAQKLYGEQVVYERHRHRYEFNNSYRNLFIESGYTISGSSPDGRLVELIELKGHPFFTACQYHPEFLSRPGKPHPLFRGLIEAAQLRLPASPDEALRRQSQTNISAQEQPSRIG.

Residues 1 to 267 form an amidoligase domain region; it reads MAKFVFVTGG…CLEMLDVLNL (267 aa). S13 serves as a coordination point for CTP. Residue S13 coordinates UTP. ATP is bound by residues 14–19 and D71; that span reads SIGKGI. The Mg(2+) site is built by D71 and E141. CTP is bound by residues 148-150, 188-193, and K224; these read DIE and KTKPTQ. UTP is bound by residues 188–193 and K224; that span reads KTKPTQ. The region spanning 292–534 is the Glutamine amidotransferase type-1 domain; the sequence is KVALVGKYVQ…IEAAQLRLPA (243 aa). An L-glutamine-binding site is contributed by G354. C381 acts as the Nucleophile; for glutamine hydrolysis in catalysis. Residues 382–385, E405, and R462 contribute to the L-glutamine site; that span reads LGMQ. Catalysis depends on residues H507 and E509. A disordered region spans residues 536-558; sequence PDEALRRQSQTNISAQEQPSRIG. Polar residues predominate over residues 542 to 558; it reads RQSQTNISAQEQPSRIG.

This sequence belongs to the CTP synthase family. Homotetramer.

It carries out the reaction UTP + L-glutamine + ATP + H2O = CTP + L-glutamate + ADP + phosphate + 2 H(+). The catalysed reaction is L-glutamine + H2O = L-glutamate + NH4(+). The enzyme catalyses UTP + NH4(+) + ATP = CTP + ADP + phosphate + 2 H(+). It participates in pyrimidine metabolism; CTP biosynthesis via de novo pathway; CTP from UDP: step 2/2. Its activity is regulated as follows. Allosterically activated by GTP, when glutamine is the substrate; GTP has no effect on the reaction when ammonia is the substrate. The allosteric effector GTP functions by stabilizing the protein conformation that binds the tetrahedral intermediate(s) formed during glutamine hydrolysis. Inhibited by the product CTP, via allosteric rather than competitive inhibition. Functionally, catalyzes the ATP-dependent amination of UTP to CTP with either L-glutamine or ammonia as the source of nitrogen. Regulates intracellular CTP levels through interactions with the four ribonucleotide triphosphates. The chain is CTP synthase from Prochlorococcus marinus (strain MIT 9313).